Reading from the N-terminus, the 457-residue chain is Multidrug resistance protein MdtK (457 aa).

The next 12 helical transmembrane spans lie at 11–31 (LLALAIPVIFAQIAQTSMGVV), 53–73 (IWLPAILFGHGLLLALTPVIA), 93–113 (VLAGLVSVLIMLVLWNAGYII), 127–147 (AVNYLRALLWGAPGYLFFQVM), 160–180 (GMAMGFIGLLVNIPVNYIFIY), 188–208 (LGGVGCGVATASVYWVMFFCM), 243–263 (MPVALALFFEVTLFAVVALLV), 276–296 (IALNFSSLMFVLPMSMSAAVT), 316–336 (RTGIIVGICLAVLTALFTVVF), 357–377 (LMLLAAIYQISDSIQVIGSGV), 387–407 (IFFITFIAYWVLGLPSGYILG), and 418–438 (PAGFWFGFILGLTSAAIMMMW).

Belongs to the multi antimicrobial extrusion (MATE) (TC 2.A.66.1) family. MdtK subfamily.

It localises to the cell inner membrane. In terms of biological role, multidrug efflux pump that functions probably as a Na(+)/drug antiporter. The chain is Multidrug resistance protein MdtK from Cronobacter sakazakii (strain ATCC BAA-894) (Enterobacter sakazakii).